The chain runs to 318 residues: N-succinylornithine carbamoyltransferase (318 aa).

Residues 47–50, Trp75, and Arg110 each bind carbamoyl phosphate; that span reads SLRT. N(2)-succinyl-L-ornithine is bound at residue Glu142. 147–150 serves as a coordination point for carbamoyl phosphate; that stretch reads HPLQ. His176 and Lys236 together coordinate N(2)-succinyl-L-ornithine. Position 274–275 (274–275) interacts with carbamoyl phosphate; the sequence is CL. Arg278 lines the N(2)-succinyl-L-ornithine pocket. Arg302 is a carbamoyl phosphate binding site.

Belongs to the aspartate/ornithine carbamoyltransferase superfamily. SOTCase family. Homotrimer.

It carries out the reaction N(2)-succinyl-L-ornithine + carbamoyl phosphate = N(2)-succinyl-L-citrulline + phosphate + H(+). Its pathway is amino-acid biosynthesis; L-arginine biosynthesis. Catalyzes the transfer of the carbamoyl group from carbamoyl phosphate to the delta-amino group of N(2)-succinyl-L-ornithine to produce N(2)-succinyl-L-citrulline. Is essential for arginine biosynthesis. Has no activity with either L-ornithine or L-aspartate as substrate. Also has no detectable AOTCase activity, being unable to convert N(2)-acetyl-L-ornithine to N(2)-acetyl-L-citrulline. This chain is N-succinylornithine carbamoyltransferase, found in Bacteroides thetaiotaomicron (strain ATCC 29148 / DSM 2079 / JCM 5827 / CCUG 10774 / NCTC 10582 / VPI-5482 / E50).